Here is a 531-residue protein sequence, read N- to C-terminus: Zinc finger protein 692 (531 aa).

Basic and acidic residues predominate over residues 155–178 (EAQGLECEQRERTQETRLSRRVDS). Disordered regions lie at residues 155–249 (EAQG…PATL) and 287–307 (MTESLESPGSQAQSAPNPTWD). The span at 186-206 (LGEDQDVEEEEEEEEEEEELL) shows a compositional bias: acidic residues. Phosphoserine is present on Ser-231. The span at 290 to 303 (SLESPGSQAQSAPN) shows a compositional bias: polar residues. 5 C2H2-type zinc fingers span residues 327-352 (MPCDFPGCGRIFSNRQYLNHHKKYQH), 358-382 (FCCPEPACGKSFNFKKHLKEHVKLH), 388-410 (YICEFCARSFRTSSNLVIHRRIH), 416-438 (LQCEICGFTCRQKASLNWHRRKH), and 447-470 (FPCEFCGKRFEKPDSVVAHCSKSH). The residue at position 469 (Ser-469) is a Phosphoserine. A disordered region spans residues 474-531 (LPAQEPPGSLVSSPSISAPESLQSPEGASISTTSDSNPASSTSISSPGVPDPRNREKS). Over residues 483–499 (LVSSPSISAPESLQSPE) the composition is skewed to polar residues. Residues 502–520 (SISTTSDSNPASSTSISSP) show a composition bias toward low complexity.

This sequence belongs to the krueppel C2H2-type zinc-finger protein family. In terms of processing, phosphorylation at Ser-469 results in loss of DNA-binding activity.

The protein localises to the nucleus. Its function is as follows. May act as an transcriptional repressor for PCK1 gene expression, in turn may participate in the hepatic gluconeogenesis regulation through the activated AMPK signaling pathway. In Mus musculus (Mouse), this protein is Zinc finger protein 692.